The chain runs to 539 residues: Squalene monooxygenase SE1 (539 aa).

2 helical membrane-spanning segments follow: residues 22–42 (LLID…FLLL) and 71–91 (IAGS…ALAY). FAD contacts are provided by residues 84-85 (VA), 104-105 (ER), Arg-112, Arg-183, Val-199, Asp-361, and Met-374. A helical membrane pass occupies residues 472-492 (LFLHFFAVAIYGVGRLLIPFP).

This sequence belongs to the squalene monooxygenase family. FAD serves as cofactor. In terms of tissue distribution, mostly expressed in flower buds and leaves, and, to a lower extent, at high levels thought, in roots and petioles. In petioles, preferentially observed in vascular bundle tissue (phloem cells and parenchymatous cells near xylem) and resin ducts.

The protein localises to the microsome membrane. The protein resides in the endoplasmic reticulum membrane. The enzyme catalyses squalene + reduced [NADPH--hemoprotein reductase] + O2 = (S)-2,3-epoxysqualene + oxidized [NADPH--hemoprotein reductase] + H2O + H(+). The protein operates within terpene metabolism; lanosterol biosynthesis; lanosterol from farnesyl diphosphate: step 2/3. Its function is as follows. Component of the triterpene saponins (e.g. ginsenosides or panaxosides) and phytosterols biosynthetic pathways. Catalyzes the first oxygenation step in sterol biosynthesis and is suggested to be one of the rate-limiting enzymes in this pathway. The sequence is that of Squalene monooxygenase SE1 from Panax ginseng (Korean ginseng).